Here is a 623-residue protein sequence, read N- to C-terminus: MAU2 chromatid cohesion factor homolog (623 aa).

TPR repeat units follow at residues phenylalanine 96 to asparagine 129, glycine 451 to glutamate 484, and serine 491 to isoleucine 524.

Belongs to the SCC4/mau-2 family. As to quaternary structure, interacts with Nipped-B to form the cohesin loading complex.

The protein localises to the nucleus. It is found in the nucleoplasm. In terms of biological role, required for association of the cohesin complex with chromatin during interphase. Plays a role in sister chromatid cohesion and normal progression through prometaphase. The polypeptide is MAU2 chromatid cohesion factor homolog (Drosophila grimshawi (Hawaiian fruit fly)).